Consider the following 323-residue polypeptide: Formyl peptide receptor-related sequence 4 (323 aa).

Residues 1 to 29 (MEVNISMPLNGSEVVFYDSTTSRVLWILS) lie on the Extracellular side of the membrane. Residues asparagine 4 and asparagine 10 are each glycosylated (N-linked (GlcNAc...) asparagine). Residues 30 to 50 (LVVLFITFVLGVLGNGLVIWV) traverse the membrane as a helical segment. The Cytoplasmic segment spans residues 51–66 (AGFQMAHTVTTVSYLN). The helical transmembrane segment at 67-87 (LALSDLSFMATLPLHIISMVM) threads the bilayer. At 88-99 (RGKWLFGWFLCK) the chain is on the extracellular side. A disulfide bridge links cysteine 98 with cysteine 176. A helical transmembrane segment spans residues 100–120 (LVHIIANINLFVSIFLITLIA). Topologically, residues 121–144 (MDRCICVLCPVWSQNHRTVSLARK) are cytoplasmic. Residues 145-165 (VVLGAWIFALLLTLPHFLFLT) traverse the membrane as a helical segment. The Extracellular segment spans residues 166 to 202 (TVRDARGDVYCISKFESWVATSEEQLKVSVIAATASG). A helical membrane pass occupies residues 203 to 223 (IINFIIGFSMPMSFIAICYGL). At 224–241 (MAAKICRRGFVNSSRPLR) the chain is on the cytoplasmic side. Residues 242 to 262 (VLTAVAVSFFVCWFPFQLIML) form a helical membrane-spanning segment. Residues 263 to 280 (LGNIFNNETLSIIHMLVN) lie on the Extracellular side of the membrane. Asparagine 269 carries an N-linked (GlcNAc...) asparagine glycan. Residues 281 to 301 (PANTLASFNSCLNPILYVFLG) form a helical membrane-spanning segment. Residues 302 to 323 (QEFRDRLIYSLYASLERALRED) lie on the Cytoplasmic side of the membrane.

It belongs to the G-protein coupled receptor 1 family. As to expression, expressed in 0.6 % of a subset of sensory neurons located in the apical layer of the vomeronasal organ. Each neuron appears to express only one receptor gene.

The protein localises to the cell membrane. In terms of biological role, may have an olfactory function associated with the identification of pathogens or of pathogenic states. The polypeptide is Formyl peptide receptor-related sequence 4 (Fpr-rs4) (Mus musculus (Mouse)).